A 479-amino-acid polypeptide reads, in one-letter code: Sulfate adenylyltransferase subunit 1 (479 aa).

The tr-type G domain occupies 25–239; it reads KSLLRFLTCG…EVLETVDIQR (215 aa). The segment at 34–41 is G1; it reads GSVDDGKS. Residue 34–41 participates in GTP binding; sequence GSVDDGKS. The interval 92–96 is G2; the sequence is GITID. The segment at 113 to 116 is G3; it reads DTPG. GTP contacts are provided by residues 113–117 and 168–171; these read DTPGH and NKMD. The interval 168–171 is G4; it reads NKMD. The G5 stretch occupies residues 206-208; sequence SAL.

The protein belongs to the TRAFAC class translation factor GTPase superfamily. Classic translation factor GTPase family. CysN/NodQ subfamily. In terms of assembly, heterodimer composed of CysD, the smaller subunit, and CysN.

It catalyses the reaction sulfate + ATP + H(+) = adenosine 5'-phosphosulfate + diphosphate. It functions in the pathway sulfur metabolism; hydrogen sulfide biosynthesis; sulfite from sulfate: step 1/3. In terms of biological role, with CysD forms the ATP sulfurylase (ATPS) that catalyzes the adenylation of sulfate producing adenosine 5'-phosphosulfate (APS) and diphosphate, the first enzymatic step in sulfur assimilation pathway. APS synthesis involves the formation of a high-energy phosphoric-sulfuric acid anhydride bond driven by GTP hydrolysis by CysN coupled to ATP hydrolysis by CysD. This Salmonella agona (strain SL483) protein is Sulfate adenylyltransferase subunit 1.